The primary structure comprises 387 residues: Sorting nexin-7 (387 aa).

In terms of domain architecture, PX spans 30–151 (KDLFITVDEP…IFLTAQAWEL (122 aa)). Residues R73, Q75, K103, and R117 each contribute to the a 1,2-diacyl-sn-glycero-3-phospho-(1D-myo-inositol-3-phosphate) site. Positions 178–387 (GVKNRPEEFM…HLEETSEDKP (210 aa)) constitute a BAR domain.

This sequence belongs to the sorting nexin family. Heterodimer; heterodimerizes with SNX4.

The protein resides in the early endosome membrane. In terms of biological role, involved in the regulation of endocytosis and in several stages of intracellular trafficking. Together with SNX4, involved in autophagosome assembly by regulating trafficking and recycling of phospholipid scramblase ATG9A. The chain is Sorting nexin-7 (SNX7) from Macaca fascicularis (Crab-eating macaque).